The primary structure comprises 78 residues: U-scoloptoxin(15)-Ssm2a (78 aa).

The N-terminal stretch at 1–23 is a signal peptide; the sequence is MEKKIIFLCFFVSLLTLPEFISS. An important for inhibition of KCNQ4 region spans residues 34 to 37; that stretch reads PEKK. 2 cysteine pairs are disulfide-bonded: Cys44-Cys70 and Cys48-Cys72.

The protein belongs to the SLPTX(15) family. Expressed by the venom gland.

It is found in the secreted. The protein is U-scoloptoxin(15)-Ssm2a of Scolopendra mutilans (Chinese red-headed centipede).